Consider the following 167-residue polypeptide: Telethonin (167 aa).

Serine 39 is subject to Phosphoserine. The interval 142 to 167 is disordered; the sequence is PVVPVSKPGPLRRTLSRSMSQEAQRG. Residues 157 to 167 are compositionally biased toward polar residues; that stretch reads SRSMSQEAQRG.

As to quaternary structure, interacts with MYOZ1, MYOZ2 and MYOZ3. Interacts with CSRP3. Interacts directly with the N-terminal Ig-like domains of 2 titin (TTN) molecules. Interacts with ANKRD2; the interaction is direct.

It is found in the cytoplasm. The protein localises to the myofibril. The protein resides in the sarcomere. Its function is as follows. Muscle assembly regulating factor. Mediates the antiparallel assembly of titin (TTN) molecules at the sarcomeric Z-disk. This chain is Telethonin (Tcap), found in Mus musculus (Mouse).